A 760-amino-acid chain; its full sequence is Catecholate siderophore receptor Fiu (760 aa).

Positions 1-31 are cleaved as a signal peptide; sequence MENNRNFPARQFHSLTFFAGLCIGITPVAQA. Residues 67–175 enclose the TBDR plug domain; the sequence is PVADTTRTMT…PTGSINMISK (109 aa). The region spanning 180 to 760 is the TBDR beta-barrel domain; sequence DSGIDASASI…TFLLTANMHF (581 aa). A TonB C-terminal box motif is present at residues 743–760; it reads RYHPGEPRTFLLTANMHF.

This sequence belongs to the TonB-dependent receptor family.

The protein localises to the cell outer membrane. Its function is as follows. Involved in the active transport across the outer membrane of iron complexed with catecholate siderophores such as dihydroxybenzoylserine and dihydroxybenzoate. It derives its energy for transport by interacting with the trans-periplasmic membrane protein TonB. Can also transport catechol-substituted cephalosporins. Receptor for microcins M, H47 and E492. The sequence is that of Catecholate siderophore receptor Fiu (fiu) from Escherichia coli (strain K12).